A 1364-amino-acid chain; its full sequence is Poly(A) RNA polymerase gld-2 homolog A (1364 aa).

Low complexity predominate over residues 27-51 (NSTNTTASPATTNTINTTTKTITTS). 5 disordered regions span residues 27-97 (NSTN…VVHT), 159-203 (SRPS…EAIT), 315-338 (AVGT…VSST), 417-535 (APAT…STST), and 666-732 (LGLD…LSDA). Positions 66–91 (LEIEDSGRNEPEDLEHGAAKPLEQRK) are enriched in basic and acidic residues. A compositionally biased stretch (low complexity) spans 175 to 198 (GTTVAASTTPSTTVTTSSGSPGSG). Low complexity predominate over residues 417 to 426 (APATGAASSS). Positions 427–444 (DQNVATKRNHQGAATQNN) are enriched in polar residues. Residues 445 to 455 (HRNRHNAKKGG) are compositionally biased toward basic residues. Positions 461–493 (KELTSNSSESLSNSSSKSQLNKRPSSSSSISPI) are enriched in low complexity. Basic residues predominate over residues 494-504 (KHPHRNYRNRM). Residues 509 to 535 (TEPTEQKAATTTVPISNYQPPQQSTST) are compositionally biased toward polar residues. Mg(2+) is bound by residues D993 and D995. The PAP-associated domain occupies 1163-1224 (TLGDLLLSFL…CIEEPFDQTN (62 aa)).

Belongs to the DNA polymerase type-B-like family. GLD2 subfamily. Interacts with Fmr1 and eIF-4E. Mg(2+) serves as cofactor. Requires Mn(2+) as cofactor. In terms of tissue distribution, expressed in the brain.

It is found in the cytoplasm. It localises to the nucleus. The catalysed reaction is RNA(n) + ATP = RNA(n)-3'-adenine ribonucleotide + diphosphate. Its function is as follows. Cytoplasmic poly(A) RNA polymerase that adds successive AMP monomers to the 3'-end of specific RNAs, forming a poly(A) tail. In contrast to the canonical nuclear poly(A) RNA polymerase, it only adds poly(A) to selected cytoplasmic mRNAs. Required for formation of long term memory. The sequence is that of Poly(A) RNA polymerase gld-2 homolog A (Gld2) from Drosophila melanogaster (Fruit fly).